The following is a 369-amino-acid chain: MSLTRVSVTAVRNLHPVTLSPSPRINILYGDNGSGKTSVLEAIHLLGLARSFRSARLQPVIQYEEAACTVFGQVMLANGIASNLGISRERQGEFTIRIDGQNARSAAQLAETLPLQLINPDSFRLLEGAPKIRRQFLDWGVFHVEPRFLPVWQRLQKALRQRNSWLRHGKLDPASQAAWDRELSLASDEIDAYRRSYIQALKPVFEETLAELVSLDDLTLSYYRGWDKDRDLQDVLASSLLRDQQMGHTQAGPQRADLRIRLAGHNAAEILSRGQQKLVVCALRIAQGHLINRAKRGQCVYLVDDLPSELDEQHRMALCRLLEDLGCQVFITCVDPQLLKDGWRTDTPVAMFHVEHGKVSQTTTIGSEA.

An ATP-binding site is contributed by 30 to 37 (GDNGSGKT).

This sequence belongs to the RecF family.

The protein resides in the cytoplasm. The RecF protein is involved in DNA metabolism; it is required for DNA replication and normal SOS inducibility. RecF binds preferentially to single-stranded, linear DNA. It also seems to bind ATP. This Pseudomonas paraeruginosa (strain DSM 24068 / PA7) (Pseudomonas aeruginosa (strain PA7)) protein is DNA replication and repair protein RecF.